Consider the following 415-residue polypeptide: Tyrosine--tRNA ligase (415 aa).

Residue Tyr-34 participates in L-tyrosine binding. The 'HIGH' region signature appears at Pro-39–Asn-48. L-tyrosine is bound by residues Tyr-162 and Gln-166. The short motif at Lys-224–Ser-228 is the 'KMSKS' region element. Lys-227 contacts ATP. The 68-residue stretch at Ile-346 to Asn-413 folds into the S4 RNA-binding domain.

Belongs to the class-I aminoacyl-tRNA synthetase family. TyrS type 1 subfamily. In terms of assembly, homodimer.

The protein localises to the cytoplasm. It carries out the reaction tRNA(Tyr) + L-tyrosine + ATP = L-tyrosyl-tRNA(Tyr) + AMP + diphosphate + H(+). Functionally, catalyzes the attachment of tyrosine to tRNA(Tyr) in a two-step reaction: tyrosine is first activated by ATP to form Tyr-AMP and then transferred to the acceptor end of tRNA(Tyr). The polypeptide is Tyrosine--tRNA ligase (Ureaplasma urealyticum serovar 10 (strain ATCC 33699 / Western)).